Reading from the N-terminus, the 169-residue chain is Phosphopantetheine adenylyltransferase (169 aa).

Serine 10 provides a ligand contact to substrate. ATP-binding positions include 10 to 11 and histidine 18; that span reads SF. Positions 42, 79, and 93 each coordinate substrate. Residues 94 to 96, glutamate 104, and 129 to 135 each bind ATP; these read GLR and VRPITAT.

It belongs to the bacterial CoaD family. As to quaternary structure, homohexamer. Requires Mg(2+) as cofactor.

It localises to the cytoplasm. The catalysed reaction is (R)-4'-phosphopantetheine + ATP + H(+) = 3'-dephospho-CoA + diphosphate. It participates in cofactor biosynthesis; coenzyme A biosynthesis; CoA from (R)-pantothenate: step 4/5. In terms of biological role, reversibly transfers an adenylyl group from ATP to 4'-phosphopantetheine, yielding dephospho-CoA (dPCoA) and pyrophosphate. This chain is Phosphopantetheine adenylyltransferase, found in Rhodopseudomonas palustris (strain ATCC BAA-98 / CGA009).